The following is a 150-amino-acid chain: Small ribosomal subunit protein uS7c (150 aa).

Belongs to the universal ribosomal protein uS7 family. Part of the 30S ribosomal subunit.

The protein resides in the plastid. It is found in the chloroplast. In terms of biological role, one of the primary rRNA binding proteins, it binds directly to 16S rRNA where it nucleates assembly of the head domain of the 30S subunit. The sequence is that of Small ribosomal subunit protein uS7c (rps7) from Huperzia lucidula (Shining clubmoss).